A 745-amino-acid polypeptide reads, in one-letter code: Polyribonucleotide nucleotidyltransferase (745 aa).

Mg(2+) contacts are provided by aspartate 487 and aspartate 493. The region spanning 554–613 (PRIETMQIPTDKIRDVIGTGGKIIREIVEKTGAKINIEDTGIVKIASSDGKAIKAAYNWI) is the KH domain. An S1 motif domain is found at 623 to 691 (GTIYDGTIVK…ERGKIRLSMK (69 aa)). The segment at 695–745 (QETGEDLTEKLKAERAERGEPEREERSDRGDRGDRGPRRDRGERRRESSGE) is disordered. Positions 701–745 (LTEKLKAERAERGEPEREERSDRGDRGDRGPRRDRGERRRESSGE) are enriched in basic and acidic residues.

Belongs to the polyribonucleotide nucleotidyltransferase family. Mg(2+) is required as a cofactor.

The protein localises to the cytoplasm. The enzyme catalyses RNA(n+1) + phosphate = RNA(n) + a ribonucleoside 5'-diphosphate. Functionally, involved in mRNA degradation. Catalyzes the phosphorolysis of single-stranded polyribonucleotides processively in the 3'- to 5'-direction. In Methylorubrum extorquens (strain CM4 / NCIMB 13688) (Methylobacterium extorquens), this protein is Polyribonucleotide nucleotidyltransferase.